A 185-amino-acid chain; its full sequence is Large ribosomal subunit protein bL25 (185 aa).

This sequence belongs to the bacterial ribosomal protein bL25 family. CTC subfamily. Part of the 50S ribosomal subunit; part of the 5S rRNA/L5/L18/L25 subcomplex. Contacts the 5S rRNA. Binds to the 5S rRNA independently of L5 and L18.

This is one of the proteins that binds to the 5S RNA in the ribosome where it forms part of the central protuberance. The protein is Large ribosomal subunit protein bL25 of Chlamydia trachomatis serovar A (strain ATCC VR-571B / DSM 19440 / HAR-13).